Here is a 217-residue protein sequence, read N- to C-terminus: MNQSLLSEFGDPLARVEAALAALRAGRGVLVADDEDRENEGDLIFAAQTMTNEQMAMMIRECSGIVCLCLTDERVRQLALPMMVEANSSHYQTAFTVTIEAAQGVTTGVSAADRITTIRAAIADGAKPSDLHRPGHVFPLRARTGGVLTRRGHTEATVDLMQLAGLKPFGVLCELTKEDGSMARLPDLVAFGRLHQMPVLTIEDLVQYRQLLSERSA.

Residues 37-38 (RE), D42, 150-154 (RRGHT), and E174 contribute to the D-ribulose 5-phosphate site. E38 is a Mg(2+) binding site. Position 153 (H153) interacts with Mg(2+).

The protein belongs to the DHBP synthase family. Homodimer. Mg(2+) serves as cofactor. Requires Mn(2+) as cofactor.

It carries out the reaction D-ribulose 5-phosphate = (2S)-2-hydroxy-3-oxobutyl phosphate + formate + H(+). It functions in the pathway cofactor biosynthesis; riboflavin biosynthesis; 2-hydroxy-3-oxobutyl phosphate from D-ribulose 5-phosphate: step 1/1. Catalyzes the conversion of D-ribulose 5-phosphate to formate and 3,4-dihydroxy-2-butanone 4-phosphate. In Aeromonas salmonicida (strain A449), this protein is 3,4-dihydroxy-2-butanone 4-phosphate synthase.